A 2822-amino-acid chain; its full sequence is Piezo-type mechanosensitive ion channel component 2 (2822 aa).

At 1-12 (MASEVVCGLIFR) the chain is on the cytoplasmic side. Residues 13-24 (LLLPICLAVACA) form a helical membrane-spanning segment. Over 25 to 30 (FRYNGL) the chain is Extracellular. Residues 31-43 (SFVYLIYLLLIPL) traverse the membrane as a helical segment. At 44–50 (FSEPTKA) the chain is on the cytoplasmic side. The helical transmembrane segment at 51–76 (TMQGHTGRLLQSLCITSLSFLLLHII) threads the bilayer. The Extracellular segment spans residues 77 to 122 (FHITLASLEAQHRITPAYNCSTWEKTFRQIGFESLKGADAGNGIRV). N-linked (GlcNAc...) asparagine glycosylation occurs at asparagine 95. The helical transmembrane segment at 123 to 141 (FVPDIGMFIASLTIWLVCR) threads the bilayer. At 142-221 (TIVKKPDTEE…KEFIGNMITT (80 aa)) the chain is on the cytoplasmic side. Residues 222–237 (AGKVVVTILLGSSGMM) form a helical membrane-spanning segment. Topologically, residues 238-240 (LPS) are extracellular. A helical transmembrane segment spans residues 241–258 (LTSAVYFFVFLGLCTWWS). Residues 259–264 (WCRTFD) lie on the Cytoplasmic side of the membrane. Residues 265–287 (PLLFGCLCVLLAIFTAGHLIGLY) traverse the membrane as a helical segment. At 288–335 (LYQFQFFQEAVPPNDYYARLFGIKSVIQTDCASTWKIIVNPDLSWYHH) the chain is on the extracellular side. A helical transmembrane segment spans residues 336 to 355 (ANPILLLVMYYTLATLIRIW). Topologically, residues 356–492 (LQEPLVQEEM…SVRMHAMVAV (137 aa)) are cytoplasmic. A disordered region spans residues 450-481 (YRWEPSEESSEKKEEEEDKREDSEGEGSQEEK). Positions 455-482 (SEESSEKKEEEEDKREDSEGEGSQEEKR) form a coiled coil. The span at 463–477 (EEEEDKREDSEGEGS) shows a compositional bias: acidic residues. Residues 493-514 (FQFIMKQSYICALIAMMAWSIT) traverse the membrane as a helical segment. At 515-519 (YHSWL) the chain is on the extracellular side. A helical membrane pass occupies residues 520–531 (TFVLLIWSCTLW). Over 532 to 535 (MIRN) the chain is Cytoplasmic. The chain crosses the membrane as a helical span at residues 536–562 (RRKYAMISSPFMVVYANLLLVLQYIWS). Over 563–583 (FELPEIKKVPGFLEKKEPGEL) the chain is Extracellular. A helical transmembrane segment spans residues 584–614 (ASKILFTITFWLLLRQHLTEQKALREKEALL). Residues 615-689 (SEVKIGSQEL…GNLVVALFIK (75 aa)) lie on the Cytoplasmic side of the membrane. 2 stretches are compositionally biased toward acidic residues: residues 624-633 (LEEKEDEELQ) and 643-652 (EKEEEEEEEI). Residues 624–668 (LEEKEDEELQDVQVEGEPTEKEEEEEEEIKEERHEVKKEEEEEVE) form a disordered region. Residues 653–662 (KEERHEVKKE) show a composition bias toward basic and acidic residues. The helical transmembrane segment at 690–703 (YWIYVCGGMFFFVS) threads the bilayer. The Extracellular segment spans residues 704 to 709 (FEGKIV). Residues 710 to 728 (MYKIIYMVLFLFCVALYQV) form a helical membrane-spanning segment. Over 729-737 (HYEWWRKIL) the chain is Cytoplasmic. A helical membrane pass occupies residues 738–757 (KYFWMSVVIYTMLVLIFIYT). Residues 758-789 (YQFENFPGLWQNMTGLKKEKLEDLGLKQFTVA) are Extracellular-facing. A helical membrane pass occupies residues 790–811 (ELFTRIFIPTSFLLVCILHLHY). Residues 812–957 (FHDRFLELTD…QVFMWWILEL (146 aa)) lie on the Cytoplasmic side of the membrane. Serine 856 is subject to Phosphoserine. A compositionally biased stretch (basic and acidic residues) spans 875-901 (QKLAESGEERPEECVKKTEKGEAGKDS). A disordered region spans residues 875–919 (QKLAESGEERPEECVKKTEKGEAGKDSDESEEEEDEEEESEEEES). Acidic residues predominate over residues 902–919 (DESEEEEDEEEESEEEES). The chain crosses the membrane as a helical span at residues 958-973 (HIIKIVSSYIIWVTVK). The Extracellular segment spans residues 974-979 (EVSLFN). A helical transmembrane segment spans residues 980 to 989 (YVFLISWAFA). Over 990-997 (LPYAKLRR) the chain is Cytoplasmic. The helical transmembrane segment at 998–1018 (AASSVCTVWTCVIIVCKMLYQ) threads the bilayer. Over 1019 to 1074 (LQTIKPENFSVNCSLPNENQTNIPLHELNKSLLYSAPVDPTEWVGLRKSSPLLVYL) the chain is Extracellular. N-linked (GlcNAc...) asparagine glycosylation occurs at asparagine 1030. Cysteines 1031 and 1209 form a disulfide. A helical transmembrane segment spans residues 1075–1099 (RNNLLMLAILAFEVTVYRHQEYYRG). The Cytoplasmic portion of the chain corresponds to 1100–1140 (RNNLTAPVSKTIFHDITRLHLDDGLINCAKYFVNYFFYKFG). The helical transmembrane segment at 1141-1155 (LETCFLMSVNVIGQR) threads the bilayer. The Extracellular portion of the chain corresponds to 1156 to 1157 (MD). A helical membrane pass occupies residues 1158 to 1171 (FYAMIHACWLIGVL). Topologically, residues 1172-1182 (YRRRRKAIAEV) are cytoplasmic. The chain crosses the membrane as a helical span at residues 1183-1202 (WPKYCCFLACIITFQYFVCI). At 1203 to 1239 (GIPPAPCRDYPWRFKGAYFNDNIIKWLYFPDFIVRPN) the chain is on the extracellular side. A helical transmembrane segment spans residues 1240–1260 (PVFLVYDFMLLLCASLQRQIF). The Cytoplasmic portion of the chain corresponds to 1261–1314 (EDENKAAVRIMAGDNVEICMNLDAASFSQHNPVPDFIHCRSYLDMSKVIIFSYL). The chain crosses the membrane as a helical span at residues 1315 to 1327 (FWFVLTIIFITGT). Residues 1328 to 1333 (TRISIF) lie on the Extracellular side of the membrane. Residues 1334 to 1346 (CMGYLVACFYFLL) form a helical membrane-spanning segment. Residues 1347–1355 (FGGDLLLKP) lie on the Cytoplasmic side of the membrane. A helical transmembrane segment spans residues 1356–1381 (IKSILRYWDWLIAYNVFVITMKNILS). The Extracellular portion of the chain corresponds to 1382 to 1430 (IGACGYIGALVRNSCWLIQAFSLACTVKGYQMPEDDSRCKLPSGEAGII). The chain crosses the membrane as a helical span at residues 1431 to 1447 (WDSICFAFLLLQRRVFM). The Cytoplasmic portion of the chain corresponds to 1448–1991 (SYYFLHVVAD…YAMYNTLVAR (544 aa)). Residues 1475-1515 (TIVKAVKARIEEEKKSMDQLKRQMDRIKARQQKYKKGKERM) adopt a coiled-coil conformation. Disordered regions lie at residues 1505–1551 (QQKY…KKKQ) and 1611–1653 (LRQR…KKSD). Over residues 1611–1621 (LRQRRKEKKKL) the composition is skewed to basic residues. The span at 1622–1633 (AREEQKERRKGS) shows a compositional bias: basic and acidic residues. The helical transmembrane segment at 1992–2006 (SEMVCYFVIILNHMT) threads the bilayer. At 2007 to 2013 (SASIITL) the chain is on the extracellular side. Residues 2014–2025 (LLPILIFLWAML) form a helical membrane-spanning segment. Topologically, residues 2026–2031 (SVPRPS) are cytoplasmic. A helical transmembrane segment spans residues 2032 to 2053 (RRFWMMAIVYTEVAIVVKYFFQ). Topologically, residues 2054 to 2086 (FGFFPWNKDLEIYKERPYFPPNIIGVEKKEGYV) are extracellular. Residues 2087-2105 (LYDLIQLLALFFHRSILKC) traverse the membrane as a helical segment. Topologically, residues 2106-2259 (HGLWDEDDIV…HPDYSAVTDV (154 aa)) are cytoplasmic. Disordered stretches follow at residues 2120–2139 (DKEG…GSSD) and 2164–2205 (IRRK…SVLS). The span at 2170–2197 (CSSSQISPRSSFSSNRSKRGSTSTRNSS) shows a compositional bias: low complexity. The helical transmembrane segment at 2260–2279 (YVLMFLADTVDFIIIVFGFW) threads the bilayer. Residues 2280–2301 (AFGKHSAAADITSSLSEDQVPG) lie on the Extracellular side of the membrane. The chain crosses the membrane as a helical span at residues 2302 to 2322 (PFLVMVLIQFGTMVVDRALYL). Residues 2323-2326 (RKTV) are Cytoplasmic-facing. The helical transmembrane segment at 2327 to 2350 (LGKVIFQVILVFGIHFWMFFILPG) threads the bilayer. At 2351-2359 (VTERKFSQN) the chain is on the extracellular side. The helical transmembrane segment at 2360–2382 (LVAQLWYFVKCVYFGLSAYQIRC) threads the bilayer. The Cytoplasmic segment spans residues 2383–2467 (GYPTRVLGNF…YPQPRGQKKK (85 aa)). The chain crosses the membrane as a helical span at residues 2468–2491 (KAVKYGMGGMIIVLLICIVWFPLL). Residues 2492 to 2739 (FMSLIKSVAG…PSLGFLAGYG (248 aa)) are Extracellular-facing. A glycan (N-linked (GlcNAc...) asparagine) is linked at asparagine 2692. Residues 2740 to 2760 (IMGLYASVVLVIGKFVREFFS) form a helical membrane-spanning segment. Residues 2761–2822 (GISHSIMFEE…MIKWTREKTN (62 aa)) are Cytoplasmic-facing.

It belongs to the PIEZO (TC 1.A.75) family. In terms of assembly, homotrimer; the homotrimer forms a propeller-shaped Piezo channel with a cation-ion conducting pore. Heterotrimeric interaction may occur between PIEZO1 and PIEZO2. Interacts with STOM13. Interacts with TMC7; the interaction inhibits PIEZO2-conducted mechanically activated currents. Interacts with TMC1; the interaction may be part of the MET complex. Interacts with MDFIC (via C-terminus); the interaction prolongs Piezo channel inactivation. Interacts with MDFI (via C-terminus); the interaction prolongs Piezo channel inactivation. In terms of tissue distribution, expressed in bladder, colon, and lung, but less abundant in kidney or skin. Strong expression is observed in dorsal root ganglia (DRG) sensory neurons. Expressed in a wide range of cutaneous low-threshold mechanoreceptors (LTMRs), including Merkel cells and Meissner's corpuscles. Expressed in sensory neurons. Expressed in cochlear inner and outer hair cells and vestibular organ hair cells. Expressed in pulmonary neuroepithelial cell bodies. Expressed in bladder urothelium and sensory neurons of the lower urinary tract. Expressed in sensory endings of proprioceptors innervating muscle spindles and Golgi tendon organs.

It localises to the cell membrane. The catalysed reaction is Ca(2+)(in) = Ca(2+)(out). Regulated by auxillary subunits MDFIC and MDFI. Channel activity is inhibited by TMEM120aa. Phosphatidic acid and lysophosphatidic acid inhibit Piezo2 channel activity. In terms of biological role, pore-forming subunit of the mechanosensitive non-specific cation Piezo channel required for rapidly adapting mechanically activated (MA) currents and has a key role in sensing touch and tactile pain. Piezo channels are homotrimeric three-blade propeller-shaped structures that utilize a cap-motion and plug-and-latch mechanism to gate their ion-conducting pathways. Expressed in sensory neurons, is essential for diverse physiological processes, including respiratory control, systemic metabolism, urinary function, and proprioception. Mediates airway stretch sensing, enabling efficient respiration at birth and maintaining normal breathing in adults. It regulates brown and beige adipose tissue morphology and function, preventing systemic hypermetabolism. In the lower urinary tract, acts as a sensor in both the bladder urothelium and innervating sensory neurons and is required for bladder-stretch sensing and urethral micturition reflexes, ensuring proper urinary function. Additionally, Piezo2 serves as the principal mechanotransducer in proprioceptors, facilitating proprioception and coordinated body movements. In inner ear hair cells, PIEZO1/2 subunits may constitute part of the mechanotransducer (MET) non-selective cation channel complex where they may act as pore-forming ion-conducting component in the complex. Required for Merkel-cell mechanotransduction. Plays a major role in light-touch mechanosensation. The chain is Piezo-type mechanosensitive ion channel component 2 from Mus musculus (Mouse).